The primary structure comprises 344 residues: tRNA N6-adenosine threonylcarbamoyltransferase (344 aa).

Fe cation is bound by residues H111 and H115. Substrate is bound by residues 134-138 (LVSGG), D167, G180, and N274. D302 lines the Fe cation pocket.

It belongs to the KAE1 / TsaD family. It depends on Fe(2+) as a cofactor.

It localises to the cytoplasm. The enzyme catalyses L-threonylcarbamoyladenylate + adenosine(37) in tRNA = N(6)-L-threonylcarbamoyladenosine(37) in tRNA + AMP + H(+). In terms of biological role, required for the formation of a threonylcarbamoyl group on adenosine at position 37 (t(6)A37) in tRNAs that read codons beginning with adenine. Is involved in the transfer of the threonylcarbamoyl moiety of threonylcarbamoyl-AMP (TC-AMP) to the N6 group of A37, together with TsaE and TsaB. TsaD likely plays a direct catalytic role in this reaction. The protein is tRNA N6-adenosine threonylcarbamoyltransferase of Dechloromonas aromatica (strain RCB).